The primary structure comprises 258 residues: Regulatory protein RecX (258 aa).

Belongs to the RecX family.

Its subcellular location is the cytoplasm. In terms of biological role, modulates RecA activity. In Streptococcus equi subsp. equi (strain 4047), this protein is Regulatory protein RecX.